The following is a 232-amino-acid chain: Large ribosomal subunit protein uL1 (232 aa).

This sequence belongs to the universal ribosomal protein uL1 family. In terms of assembly, part of the 50S ribosomal subunit.

Its function is as follows. Binds directly to 23S rRNA. The L1 stalk is quite mobile in the ribosome, and is involved in E site tRNA release. In terms of biological role, protein L1 is also a translational repressor protein, it controls the translation of the L11 operon by binding to its mRNA. The polypeptide is Large ribosomal subunit protein uL1 (Chelativorans sp. (strain BNC1)).